Here is a 485-residue protein sequence, read N- to C-terminus: UDP-N-acetylmuramate--L-alanine ligase (485 aa).

Position 120–126 (120–126) interacts with ATP; that stretch reads GSHGKTT.

The protein belongs to the MurCDEF family.

It is found in the cytoplasm. It catalyses the reaction UDP-N-acetyl-alpha-D-muramate + L-alanine + ATP = UDP-N-acetyl-alpha-D-muramoyl-L-alanine + ADP + phosphate + H(+). Its pathway is cell wall biogenesis; peptidoglycan biosynthesis. In terms of biological role, cell wall formation. The protein is UDP-N-acetylmuramate--L-alanine ligase of Rickettsia africae (strain ESF-5).